We begin with the raw amino-acid sequence, 638 residues long: 1-deoxy-D-xylulose-5-phosphate synthase (638 aa).

Thiamine diphosphate-binding positions include His-79 and Ala-120–Ser-122. Asp-151 serves as a coordination point for Mg(2+). Thiamine diphosphate contacts are provided by residues Gly-152–Ala-153, Asn-180, Tyr-289, and Glu-371. Asn-180 serves as a coordination point for Mg(2+).

The protein belongs to the transketolase family. DXPS subfamily. Homodimer. Mg(2+) is required as a cofactor. It depends on thiamine diphosphate as a cofactor.

It catalyses the reaction D-glyceraldehyde 3-phosphate + pyruvate + H(+) = 1-deoxy-D-xylulose 5-phosphate + CO2. It functions in the pathway metabolic intermediate biosynthesis; 1-deoxy-D-xylulose 5-phosphate biosynthesis; 1-deoxy-D-xylulose 5-phosphate from D-glyceraldehyde 3-phosphate and pyruvate: step 1/1. Catalyzes the acyloin condensation reaction between C atoms 2 and 3 of pyruvate and glyceraldehyde 3-phosphate to yield 1-deoxy-D-xylulose-5-phosphate (DXP). This chain is 1-deoxy-D-xylulose-5-phosphate synthase, found in Rhizobium johnstonii (strain DSM 114642 / LMG 32736 / 3841) (Rhizobium leguminosarum bv. viciae).